The chain runs to 221 residues: Putative hemin import ATP-binding protein HrtA (221 aa).

The ABC transporter domain occupies 3 to 221 (LVVKDIVKNF…IELEDGKITD (219 aa)). 39-46 (GASGSGKT) contacts ATP.

It belongs to the ABC transporter superfamily. HrtA family. In terms of assembly, the complex is composed of two ATP-binding proteins (HrtA), two transmembrane proteins (HrtB) and a solute-binding protein.

It localises to the cell membrane. Part of the ABC transporter complex hrt involved in hemin import. Responsible for energy coupling to the transport system. This Staphylococcus aureus (strain Mu50 / ATCC 700699) protein is Putative hemin import ATP-binding protein HrtA (hrtA).